The primary structure comprises 179 residues: Large ribosomal subunit protein uL5 (179 aa).

Belongs to the universal ribosomal protein uL5 family. As to quaternary structure, part of the 50S ribosomal subunit; part of the 5S rRNA/L5/L18/L25 subcomplex. Contacts the 5S rRNA and the P site tRNA. Forms a bridge to the 30S subunit in the 70S ribosome.

In terms of biological role, this is one of the proteins that bind and probably mediate the attachment of the 5S RNA into the large ribosomal subunit, where it forms part of the central protuberance. In the 70S ribosome it contacts protein S13 of the 30S subunit (bridge B1b), connecting the 2 subunits; this bridge is implicated in subunit movement. Contacts the P site tRNA; the 5S rRNA and some of its associated proteins might help stabilize positioning of ribosome-bound tRNAs. The sequence is that of Large ribosomal subunit protein uL5 from Shewanella sp. (strain MR-4).